Reading from the N-terminus, the 258-residue chain is Trans-aconitate 2-methyltransferase (258 aa).

It belongs to the methyltransferase superfamily. Tam family.

It localises to the cytoplasm. It carries out the reaction trans-aconitate + S-adenosyl-L-methionine = (E)-3-(methoxycarbonyl)pent-2-enedioate + S-adenosyl-L-homocysteine. Functionally, catalyzes the S-adenosylmethionine monomethyl esterification of trans-aconitate. The polypeptide is Trans-aconitate 2-methyltransferase (Methylobacterium nodulans (strain LMG 21967 / CNCM I-2342 / ORS 2060)).